We begin with the raw amino-acid sequence, 434 residues long: Eukaryotic translation initiation factor 3 subunit E-2 (434 aa).

Residues 219–392 (FFNHPKGRDL…GHVVMGTQPL (174 aa)) form the PCI domain.

The protein belongs to the eIF-3 subunit E family. Component of the eukaryotic translation initiation factor 3 (eIF-3) complex. The eIF-3 complex interacts with pix. Interacts with mxt.

It localises to the cytoplasm. Its function is as follows. Component of the eukaryotic translation initiation factor 3 (eIF-3) complex, which is involved in protein synthesis of a specialized repertoire of mRNAs and, together with other initiation factors, stimulates binding of mRNA and methionyl-tRNAi to the 40S ribosome. The eIF-3 complex specifically targets and initiates translation of a subset of mRNAs involved in cell proliferation. The sequence is that of Eukaryotic translation initiation factor 3 subunit E-2 (eIF3-S6-2) from Drosophila willistoni (Fruit fly).